The sequence spans 364 residues: UDP-N-acetylglucosamine--N-acetylmuramyl-(pentapeptide) pyrophosphoryl-undecaprenol N-acetylglucosamine transferase 1 (364 aa).

UDP-N-acetyl-alpha-D-glucosamine-binding positions include 10 to 12 (TGG), Asn124, Ser195, Ile250, and Gln295.

Belongs to the glycosyltransferase 28 family. MurG subfamily.

The protein resides in the cell membrane. The catalysed reaction is di-trans,octa-cis-undecaprenyl diphospho-N-acetyl-alpha-D-muramoyl-L-alanyl-D-glutamyl-meso-2,6-diaminopimeloyl-D-alanyl-D-alanine + UDP-N-acetyl-alpha-D-glucosamine = di-trans,octa-cis-undecaprenyl diphospho-[N-acetyl-alpha-D-glucosaminyl-(1-&gt;4)]-N-acetyl-alpha-D-muramoyl-L-alanyl-D-glutamyl-meso-2,6-diaminopimeloyl-D-alanyl-D-alanine + UDP + H(+). It functions in the pathway cell wall biogenesis; peptidoglycan biosynthesis. Cell wall formation. Catalyzes the transfer of a GlcNAc subunit on undecaprenyl-pyrophosphoryl-MurNAc-pentapeptide (lipid intermediate I) to form undecaprenyl-pyrophosphoryl-MurNAc-(pentapeptide)GlcNAc (lipid intermediate II). This chain is UDP-N-acetylglucosamine--N-acetylmuramyl-(pentapeptide) pyrophosphoryl-undecaprenol N-acetylglucosamine transferase 1, found in Bacillus anthracis.